The primary structure comprises 699 residues: Elongation factor G (699 aa).

Residues 8–290 form the tr-type G domain; sequence ERYRNIGIMA…AVLDYLPSPV (283 aa). Residues 17 to 24, 88 to 92, and 142 to 145 contribute to the GTP site; these read AHIDAGKT, DTPGH, and NKMD.

It belongs to the TRAFAC class translation factor GTPase superfamily. Classic translation factor GTPase family. EF-G/EF-2 subfamily.

The protein localises to the cytoplasm. Its function is as follows. Catalyzes the GTP-dependent ribosomal translocation step during translation elongation. During this step, the ribosome changes from the pre-translocational (PRE) to the post-translocational (POST) state as the newly formed A-site-bound peptidyl-tRNA and P-site-bound deacylated tRNA move to the P and E sites, respectively. Catalyzes the coordinated movement of the two tRNA molecules, the mRNA and conformational changes in the ribosome. The sequence is that of Elongation factor G from Acidithiobacillus ferrooxidans (strain ATCC 23270 / DSM 14882 / CIP 104768 / NCIMB 8455) (Ferrobacillus ferrooxidans (strain ATCC 23270)).